Here is a 552-residue protein sequence, read N- to C-terminus: Hydroxylamine reductase (552 aa).

The [2Fe-2S] cluster site is built by cysteine 5, cysteine 8, cysteine 20, and cysteine 27. Hybrid [4Fe-2O-2S] cluster contacts are provided by histidine 251, glutamate 275, cysteine 319, cysteine 407, cysteine 435, cysteine 460, glutamate 494, and lysine 496. Residue cysteine 407 is modified to Cysteine persulfide.

It belongs to the HCP family. [2Fe-2S] cluster is required as a cofactor. Requires hybrid [4Fe-2O-2S] cluster as cofactor.

It localises to the cytoplasm. The catalysed reaction is A + NH4(+) + H2O = hydroxylamine + AH2 + H(+). Functionally, catalyzes the reduction of hydroxylamine to form NH(3) and H(2)O. The chain is Hydroxylamine reductase from Shigella flexneri.